A 1426-amino-acid chain; its full sequence is Protein RhsD (1426 aa).

The disordered stretch occupies residues 256–285 (AEEARTSSLSSSDSSRPLSASAFPDTLPGT). Residues 262 to 277 (SSLSSSDSSRPLSASA) are compositionally biased toward low complexity. The tract at residues 320–1197 (YTEAGELLAV…LNEENPHHVY (878 aa)) is 28 X approximate tandem repeats. 27 tandem repeats follow at residues 334 to 356 (NTQV…HRYA), 357 to 378 (GRPE…LNPA), 379 to 421 (GLSY…ELAD), 422 to 442 (GSVT…TDAA), 443 to 464 (GRRT…TTPD), 465 to 485 (GRET…VSPD), 486 to 506 (GLES…TSRS), 507 to 529 (GETV…TDAT), 530 to 550 (GSTR…TDCS), 551 to 571 (GYQT…HREE), 572 to 592 (GISL…KDAQ), 593 to 613 (GRET…ITPD), 614 to 633 (GNRS…TTQG), 634 to 654 (GLTR…TNEN), 655 to 675 (GSHS…GGFD), 676 to 695 (GRTQ…SEDE), 696 to 715 (GLVI…RTVN), 716 to 738 (GEPA…HLSE), 739 to 762 (GHRV…QTVE), 812 to 832 (GGTP…VRSF), 833 to 861 (GSMA…HLNS), 862 to 882 (LVYD…ISGP), 883 to 905 (RQTR…LAPD), 906 to 941 (LDIR…NRIA), 942 to 970 (EDAH…VIRT), 971 to 995 (DDER…IQHG), and 996 to 1030 (EPLV…MSLS). Residues 1073–1085 (ENGEREKAQRRSL) are compositionally biased toward basic and acidic residues. Positions 1073 to 1097 (ENGEREKAQRRSLAETLQQEGSENG) are disordered. The stretch at 1173–1197 (GNTAWSAEYDEWGNQLNEENPHHVY) is repeat 28.

Belongs to the RHS family.

Functionally, rhs elements have a nonessential function. They may play an important role in the natural ecology of the cell. The protein is Protein RhsD (rhsD) of Escherichia coli (strain K12).